The chain runs to 357 residues: Putative diaminopimelate epimerase, chloroplastic (357 aa).

A chloroplast-targeting transit peptide spans 1 to 47 (MSSATAAATATIAAAAAAAAKLAATPAPAPSRRRLTLRGNPTARRCV). Active-site residues include cysteine 145 and cysteine 300.

This sequence belongs to the diaminopimelate epimerase family.

It localises to the plastid. It is found in the chloroplast. The catalysed reaction is (2S,6S)-2,6-diaminopimelate = meso-2,6-diaminopimelate. It functions in the pathway amino-acid biosynthesis; L-lysine biosynthesis via DAP pathway; DL-2,6-diaminopimelate from LL-2,6-diaminopimelate: step 1/1. This chain is Putative diaminopimelate epimerase, chloroplastic (DAPF), found in Oryza sativa subsp. indica (Rice).